A 263-amino-acid chain; its full sequence is Receptor-transporting protein 1 (263 aa).

Over 1 to 238 (MRIFRPWRLR…ETGSGWNFCS (238 aa)) the chain is Cytoplasmic. The 3CxxC-type zinc finger occupies 88 to 197 (ASGRFHCSWC…GEFCEACQEG (110 aa)). The chain crosses the membrane as a helical span at residues 239 to 259 (IPWCLFWATVLLLIIYLQLSF). At 260 to 263 (RSSV) the chain is on the extracellular side.

It belongs to the TMEM7 family. Interacts with olfactory receptors.

Its subcellular location is the cell membrane. Functionally, specifically promotes functional cell surface expression of olfactory receptors, but not of other GPCRs. In Macaca fascicularis (Crab-eating macaque), this protein is Receptor-transporting protein 1 (RTP1).